Consider the following 155-residue polypeptide: Leader peptidase HopD (155 aa).

Belongs to the peptidase A24 family.

This chain is Leader peptidase HopD (hopD), found in Salmonella typhimurium (strain LT2 / SGSC1412 / ATCC 700720).